Reading from the N-terminus, the 1437-residue chain is FYVE and coiled-coil domain-containing protein 1 (1437 aa).

An N-acetylalanine modification is found at Ala2. A coiled-coil region spans residues Ser4–Glu30. The RUN domain occupies Thr36 to Tyr169. Ser196 carries the post-translational modification Phosphoserine. 3 coiled-coil regions span residues Ser223–Gln270, Ser305–Ala846, and Ala873–Leu1110. Phosphothreonine is present on Thr372. Ser837 carries the phosphoserine modification. An FYVE-type zinc finger spans residues Asp1132–Gly1190. Zn(2+)-binding residues include Cys1138, Cys1141, Cys1154, Cys1157, Cys1162, Cys1165, Cys1182, and Cys1185. Disordered regions lie at residues Glu1191 to Ile1227 and Ser1253 to Val1289. The segment covering Gly1194–Gly1206 has biased composition (low complexity). Composition is skewed to polar residues over residues Ser1218 to Ile1227 and Ser1253 to Pro1283. The region spanning Glu1296 to Val1425 is the GOLD domain.

Can form homodimers. Interacts (via C-terminus) with MAP1LC3B. Interacts with RAB7A; the interaction with RAB7A induces FYCO1 recruitment to late endosomal/lysosomal compartments. In terms of tissue distribution, expressed in heart and testis. Expressed in the eye lens.

The protein resides in the cytoplasmic vesicle. It is found in the autophagosome. Its subcellular location is the endosome. It localises to the lysosome. Functionally, may mediate microtubule plus end-directed vesicle transport. The chain is FYVE and coiled-coil domain-containing protein 1 (Fyco1) from Mus musculus (Mouse).